Reading from the N-terminus, the 177-residue chain is Large ribosomal subunit protein uL10 (177 aa).

The protein belongs to the universal ribosomal protein uL10 family. Part of the ribosomal stalk of the 50S ribosomal subunit. The N-terminus interacts with L11 and the large rRNA to form the base of the stalk. The C-terminus forms an elongated spine to which L12 dimers bind in a sequential fashion forming a multimeric L10(L12)X complex.

Forms part of the ribosomal stalk, playing a central role in the interaction of the ribosome with GTP-bound translation factors. This chain is Large ribosomal subunit protein uL10, found in Xanthomonas axonopodis pv. citri (strain 306).